Here is a 675-residue protein sequence, read N- to C-terminus: Alpha-1,4-glucan:maltose-1-phosphate maltosyltransferase 1 (675 aa).

The alpha-maltose 1-phosphate site is built by K264, Q324, and D359. The active-site Nucleophile is D394. Residue N395 coordinates alpha-maltose 1-phosphate. Residue E423 is the Proton donor of the active site. Residue 534 to 535 coordinates alpha-maltose 1-phosphate; that stretch reads KY.

Belongs to the glycosyl hydrolase 13 family. GlgE subfamily. As to quaternary structure, homodimer.

It catalyses the reaction alpha-maltose 1-phosphate + [(1-&gt;4)-alpha-D-glucosyl](n) = [(1-&gt;4)-alpha-D-glucosyl](n+2) + phosphate. Is competitively inhibited by alpha-, beta- and gamma-cyclodextrins (cyclic maltooligosaccharides), unlike GlgE from M.tuberculosis. Its function is as follows. Maltosyltransferase that uses maltose 1-phosphate (M1P) as the sugar donor to elongate linear or branched alpha-(1-&gt;4)-glucans. Maltooligosaccharides with a degree of polymerization (DP) superior or equal to 4 are efficient acceptors, with DP6 being optimal in the GlgE-catalyzed polymerization with M1P. Is specific for the alpha-anomer of M1P as substrate, since the beta-anomer of M1P gives no activity. Alpha-D-glucose 1-phosphate cannot serve as a donor substrate, but alpha-maltosyl fluoride is an efficient donor in vitro. Exhibits an alpha-retaining catalytic mechanism, with evidence that maltooligosaccharide acceptors are extended at their non-reducing ends. Is also able to catalyze the reverse reaction in vitro, releasing M1P from glycogen or maltoheptaose in the presence of inorganic phosphate. Also catalyzes disproportionation reactions through maltosyl transfer between maltooligosaccharides. Is probably involved in a branched alpha-glucan biosynthetic pathway from trehalose, together with TreS, Mak and GlgB. The polypeptide is Alpha-1,4-glucan:maltose-1-phosphate maltosyltransferase 1 (glgE1) (Streptomyces coelicolor (strain ATCC BAA-471 / A3(2) / M145)).